Here is a 318-residue protein sequence, read N- to C-terminus: NADH-ubiquinone oxidoreductase chain 1 (318 aa).

Transmembrane regions (helical) follow at residues phenylalanine 3 to leucine 23, leucine 68 to proline 88, isoleucine 102 to alanine 122, leucine 146 to isoleucine 166, histidine 171 to alanine 191, leucine 222 to phenylalanine 242, glutamate 253 to isoleucine 273, and leucine 294 to isoleucine 314.

It belongs to the complex I subunit 1 family.

It is found in the mitochondrion inner membrane. The catalysed reaction is a ubiquinone + NADH + 5 H(+)(in) = a ubiquinol + NAD(+) + 4 H(+)(out). Its function is as follows. Core subunit of the mitochondrial membrane respiratory chain NADH dehydrogenase (Complex I) that is believed to belong to the minimal assembly required for catalysis. Complex I functions in the transfer of electrons from NADH to the respiratory chain. The immediate electron acceptor for the enzyme is believed to be ubiquinone. The sequence is that of NADH-ubiquinone oxidoreductase chain 1 (MT-ND1) from Nyctalus plancyi velutinus (Fine-haired noctule).